Consider the following 244-residue polypeptide: Ribonuclease PH (244 aa).

Phosphate contacts are provided by residues R86 and 124–126; that span reads GTR.

It belongs to the RNase PH family. As to quaternary structure, homohexameric ring arranged as a trimer of dimers.

It carries out the reaction tRNA(n+1) + phosphate = tRNA(n) + a ribonucleoside 5'-diphosphate. In terms of biological role, phosphorolytic 3'-5' exoribonuclease that plays an important role in tRNA 3'-end maturation. Removes nucleotide residues following the 3'-CCA terminus of tRNAs; can also add nucleotides to the ends of RNA molecules by using nucleoside diphosphates as substrates, but this may not be physiologically important. Probably plays a role in initiation of 16S rRNA degradation (leading to ribosome degradation) during starvation. This Glaesserella parasuis serovar 5 (strain SH0165) (Haemophilus parasuis) protein is Ribonuclease PH.